A 628-amino-acid chain; its full sequence is MSNNQQTLGFQTEVKQLLQLMIHSLYSNKEIFLRELISNASDAADKLRFKALSAPELYEGDGDLKVRIRFDEKKGTLTVSDNGIGMTREQATEHLGTIAKSGTKEFLTALGQDQAKDSQLIGQFGVGFYSAFIVADKVEVRSRAAGVPAEQGVLWTSAGEGEYSVEDIEKKERGTEITLFLREDEKEFLNEWRLREIIGKYSDHIGLPVEILTKEFDEEGKESDVKWEKINKAQALWTRAKGEISDEEYQEFYKHISHDFADPLVWQHNKVEGNQEYTSLLYVPSKAPWDLFNREQKHGLKLYVQRVFIMDDAEVFMPNYLRFMRGLLDSNDLPLNVSREILQDNKTTAALRKALTKRSLQMLEKLAKDEAEKYATFWKEFGLVLKEGVGEDFANREQIAKLFRFASTHTDSSEQSVSLADYIARMKEGQKAVYYITADSYVAAKNSPHLELFNKKGIEVLLLSDRIDEWMLSYLTEFDGKPLQSITKADLDLGDLADKTEAEKEKAQDEALSGFIERVKTLLGERVKDVRLTHRLTDTPAVVSTDNDQMTTQMAKLFAMSGQPVPEVKYTFELNPDHALVKKTAALTDESAFADWVELLLEQAMLSERGTLENPTAFIKRVNTLLAG.

The tract at residues 1-339 (MSNNQQTLGF…SNDLPLNVSR (339 aa)) is a; substrate-binding. Positions 340 to 556 (EILQDNKTTA…NDQMTTQMAK (217 aa)) are b. Positions 557-628 (LFAMSGQPVP…IKRVNTLLAG (72 aa)) are c.

The protein belongs to the heat shock protein 90 family. In terms of assembly, homodimer.

It is found in the cytoplasm. In terms of biological role, molecular chaperone. Has ATPase activity. This chain is Chaperone protein HtpG, found in Actinobacillus succinogenes (strain ATCC 55618 / DSM 22257 / CCUG 43843 / 130Z).